The chain runs to 292 residues: Shikimate dehydrogenase (NADP(+)) (292 aa).

Residues 25–27 and Thr-72 contribute to the shikimate site; that span reads SKS. Residue Lys-76 is the Proton acceptor of the active site. The shikimate site is built by Asn-97 and Asp-113. Residues 137–141, 161–166, and Met-230 contribute to the NADP(+) site; these read GAGGA and NRTQSK. Tyr-232 lines the shikimate pocket. Gly-254 contacts NADP(+).

This sequence belongs to the shikimate dehydrogenase family. In terms of assembly, homodimer.

It carries out the reaction shikimate + NADP(+) = 3-dehydroshikimate + NADPH + H(+). It participates in metabolic intermediate biosynthesis; chorismate biosynthesis; chorismate from D-erythrose 4-phosphate and phosphoenolpyruvate: step 4/7. Its function is as follows. Involved in the biosynthesis of the chorismate, which leads to the biosynthesis of aromatic amino acids. Catalyzes the reversible NADPH linked reduction of 3-dehydroshikimate (DHSA) to yield shikimate (SA). In Shewanella sp. (strain MR-7), this protein is Shikimate dehydrogenase (NADP(+)).